We begin with the raw amino-acid sequence, 782 residues long: DNA repair and recombination protein RAD54-like (782 aa).

Positions 1 to 20 (MRRSLAPSQRGGQRLSSRND) are enriched in polar residues. The tract at residues 1–28 (MRRSLAPSQRGGQRLSSRNDFTPPLLKK) is disordered. A required for chromatin remodeling, strand pairing activities and coupling of ATPase activity region spans residues 2–9 (RRSLAPSQ). T22 carries the phosphothreonine modification. Residues 168–343 (EGKRGNFNGC…FSLVNFVNPE (176 aa)) form the Helicase ATP-binding domain. 181-188 (DEMGLGKT) contributes to the ATP binding site. Residues 294–297 (DEGH) carry the DEGH box motif. Positions 501–658 (LLDFMLAAIR…NNESAEKHFT (158 aa)) constitute a Helicase C-terminal domain. Polar residues predominate over residues 741–753 (SQKIEATPATETS). Residues 741-782 (SQKIEATPATETSVEAKLEPERRKRPAMPLSDDSADEDFQGF) form a disordered region. The span at 773-782 (DSADEDFQGF) shows a compositional bias: acidic residues.

It belongs to the SNF2/RAD54 helicase family. Interacts (via N-terminus) with spn-A/Rad51.

It localises to the nucleus. Functionally, involved in mitotic DNA repair and meiotic recombination. Functions in the recombinational DNA repair pathway. Essential for interhomolog gene conversion (GC), but may have a less important role in intersister GC than spn-A/Rad51. In the presence of DNA, spn-A/Rad51 enhances the ATPase activity of okr/Rad54. The chain is DNA repair and recombination protein RAD54-like from Drosophila persimilis (Fruit fly).